We begin with the raw amino-acid sequence, 249 residues long: Vesicle-associated membrane protein-associated protein A (249 aa).

Alanine 2 carries the N-acetylalanine modification. Topologically, residues 2-227 are cytoplasmic; the sequence is ASASGAMAKH…ASFRDNVTSP (226 aa). Residues 14-131 form the MSP domain; that stretch reads ILVLDPPTDL…MDSKLRCVFE (118 aa). The phosphorylated FFAT motif binding stretch occupies residues 50–53; the sequence is KVKT. Residue lysine 125 is modified to N6-acetyllysine. Positions 135 to 144 are enriched in basic and acidic residues; the sequence is ENDKLNDMEP. A disordered region spans residues 135–167; sequence ENDKLNDMEPSKAVPLNASKQDGPMPKPHSVSL. At serine 166 the chain carries Phosphoserine. A coiled-coil region spans residues 169 to 205; the sequence is DTETRKLMEECKRLQGEMMKLSEENRHLRDEGLRLRK. The residue at position 170 (threonine 170) is a Phosphothreonine. Residues serine 214, serine 216, and serine 219 each carry the phosphoserine modification. Residues 228 to 248 traverse the membrane as a helical; Anchor for type IV membrane protein segment; the sequence is LPSLLVVIAAIFIGFFLGKFI.

The protein belongs to the VAMP-associated protein (VAP) (TC 9.B.17) family. Homodimer; disulfide-linked. Heterodimer with VAPB. Interacts with VAMP1, VAMP2, STX1A, BET1, SEC22C and with the C-terminal domain of OCLN. Interacts (via MSP domain) with OSBPL1A (via FFAT motif). Interacts (via MSP domain) with ZFYVE27; may retain ZFYVE27 in the endoplasmic reticulum and regulate its function in cell projections formation. Interacts with OSBP. Interacts (via C-terminus) with RSAD2/viperin (via C-terminus). Interacts with IFITM3. Interacts with OSBPL3 (phosphorylated form). Interacts with KIF5A in a ZFYVE27-dependent manner. Interacts (via MSP domain) with STARD3 (via phosphorylated FFAT motif); this interaction recruits VAPA to the endosome. Interacts with STARD3NL (via FFAT motif). Interacts with CERT1. Interacts with PLEKHA3 and SACM1L to form a ternary complex. Interacts with VPS13A (via FFAT motif). Interacts with RB1CC1 (via phosphorylated FFAT motif), MIGA2 (via phosphorylated FFAT motif), RMDN3 (via phosphorylated FFAT motif), KCNB1 (via phosphorylated FFAT motif) and KCNB2 (via phosphorylated FFAT motif). Interacts (via MSP domain) with WDR44 (via FFAT-like motif); the interactions connect the endoplasmic reticulum (ER) with the endosomal tubule. As to quaternary structure, (Microbial infection) Interacts with HCV protein NS5A and NS5B. Ubiquitous.

The protein localises to the endoplasmic reticulum membrane. It is found in the cell membrane. The protein resides in the cell junction. Its subcellular location is the tight junction. It localises to the nucleus membrane. Functionally, endoplasmic reticulum (ER)-anchored protein that mediates the formation of contact sites between the ER and endosomes via interaction with FFAT motif-containing proteins such as STARD3 or WDR44. STARD3-VAPA interaction enables cholesterol transfer from the ER to endosomes. Via interaction with WDR44 participates in neosynthesized protein export. In addition, recruited to the plasma membrane through OSBPL3 binding. The OSBPL3-VAPA complex stimulates RRAS signaling which in turn attenuates integrin beta-1 (ITGB1) activation at the cell surface. With OSBPL3, may regulate ER morphology. May play a role in vesicle trafficking. The sequence is that of Vesicle-associated membrane protein-associated protein A from Homo sapiens (Human).